A 1675-amino-acid polypeptide reads, in one-letter code: Clathrin heavy chain 1 (1675 aa).

Alanine 2 is subject to N-acetylalanine. The globular terminal domain stretch occupies residues alanine 2–tyrosine 479. WD40-like repeat stretches follow at residues asparagine 24–serine 67, alanine 68–aspartate 107, valine 108–alanine 149, glycine 150–glutamate 195, glycine 196–glutamine 257, asparagine 258–glutamate 301, and threonine 302–glutamate 330. Serine 67 is subject to Phosphoserine. Phosphothreonine is present on threonine 105. The residue at position 184 (tyrosine 184) is a Phosphotyrosine. Threonine 394 carries the phosphothreonine modification. A binding site for the uncoating ATPase, involved in lattice disassembly region spans residues glutamate 449–aspartate 465. The interval leucine 480 to arginine 523 is flexible linker. The tract at residues isoleucine 524–tyrosine 634 is distal segment. Residues isoleucine 524–methionine 1675 are heavy chain arm. 7 CHCR repeats span residues valine 537–valine 683, alanine 686–valine 828, isoleucine 833–aspartate 972, leucine 979–alanine 1124, tyrosine 1128–alanine 1269, leucine 1274–asparagine 1420, and leucine 1423–phenylalanine 1566. At tyrosine 634 the chain carries Phosphotyrosine. The interval alanine 639–methionine 1675 is proximal segment. Lysine 737 is subject to N6-succinyllysine. Lysine 856 bears the N6-acetyllysine mark. Tyrosine 899 is subject to Phosphotyrosine. At serine 1167 the chain carries Phosphoserine. Tyrosine 1206 bears the Phosphotyrosine mark. The involved in binding clathrin light chain stretch occupies residues alanine 1213 to lysine 1522. Serine 1229 is subject to Phosphoserine. Residue lysine 1441 is modified to N6-acetyllysine; alternate. Position 1441 is an N6-succinyllysine; alternate (lysine 1441). Residues tyrosine 1477 and tyrosine 1487 each carry the phosphotyrosine modification. At serine 1494 the chain carries Phosphoserine. Lysine 1501 carries the post-translational modification N6-acetyllysine. A trimerization region spans residues alanine 1550–methionine 1675.

It belongs to the clathrin heavy chain family. As to quaternary structure, clathrin triskelions, composed of 3 heavy chains and 3 light chains, are the basic subunits of the clathrin coat. In the presence of light chains, hub assembly is influenced by both the pH and the concentration of calcium. Interacts with HIP1. Interacts with DENND1A, DENND1B and DENND1C. Interacts with OCRL. Interacts with ERBB2. Interacts with FKBP6. Interacts with CKAP5 and TACC3 forming the TACC3/ch-TOG/clathrin complex located at spindle inter-microtubules bridges; the complex implicates clathrin triskelions; TACC3 and CLTC are proposed to form a composite microtubule interaction surface. Interacts with ATG16L1 (via N-terminus). Interacts with RFTN1; the interaction occurs in response to pathogens. Interacts with USP2 isoform 2. Interacts with TMEM106B (via N-terminus). Interacts with DNAJC6; this interaction produces a local change in heavy-chain contacts, creating a detectable global distortion of the clathrin coat and leads to the recruitment of HSPA8.

It is found in the cytoplasmic vesicle membrane. It localises to the membrane. The protein localises to the coated pit. The protein resides in the melanosome. Its subcellular location is the cytoplasm. It is found in the cytoskeleton. It localises to the spindle. Clathrin is the major protein of the polyhedral coat of coated pits and vesicles. Two different adapter protein complexes link the clathrin lattice either to the plasma membrane or to the trans-Golgi network. Acts as a component of the TACC3/ch-TOG/clathrin complex proposed to contribute to stabilization of kinetochore fibers of the mitotic spindle by acting as inter-microtubule bridge. The TACC3/ch-TOG/clathrin complex is required for the maintenance of kinetochore fiber tension. Plays a role in early autophagosome formation. Interaction with DNAJC6 mediates the recruitment of HSPA8 to the clathrin lattice and creates local destabilization of the lattice promoting uncoating. This Rattus norvegicus (Rat) protein is Clathrin heavy chain 1.